Reading from the N-terminus, the 516-residue chain is RxLR effector protein PITG_15127 (516 aa).

The first 22 residues, 1 to 22 (MRLYSGAILCTIATLLISVSTA), serve as a signal peptide directing secretion. The short motif at 48–63 (RFLRVSTQNTENGENR) is the RxLR-dEER element.

This sequence belongs to the RxLR effector family.

The protein resides in the secreted. The protein localises to the host cell membrane. Its subcellular location is the host nucleus. It is found in the host cytoplasm. Effector that enhances P.infestans colonization of Nicotiana benthamiana leaves. The sequence is that of RxLR effector protein PITG_15127 from Phytophthora infestans (strain T30-4) (Potato late blight agent).